Reading from the N-terminus, the 663-residue chain is MIDKRDDKPFKLKSKYKPSGDQPQAIESLVDNIEGGEKAQILLGATGTGKTYTMSQVISKVNKPTLVIAHNKTLAGQLYGEFKEFFPDNAVEYFVSYYDYYQPEAYVPSSDTYIEKDSSVNDEIDKLRHSATSSLLERNDVIVVASVSCIYGLGSPKEYADSAVSLRPGQEISRDTLLNQLVDIQFERNDIDFQRGCFRVRGDVVEVFPASRDEHAFRVEFFGDEIDRICEIESLTGKTIGEVDHLVLFPATHFVTNDEHMEQSIAKIQAELAEQLQLFESEGKLLEAQRLRQRTEYDIEMLREMGYTSGVENYSRHMDGRSPGEPPYTLLDFFPEDFLIMIDESHMTMGQIKGMYNGDQARKQMLVDYGFRLPSALDNRPLRREEFESHVHQIIYVSATPGEYEMSQTNTIIEQIIRPTGLLDPEIDVRPSMGQMDDLLGEINQRVARDERTFITTLTKKMAEDLTDYLKEMGVKVKYMHSDIKTLERTEIIRDLRLGVFDVLIGINLLREGIDVPEVSLVAILDADKEGFLRNERGLIQTIGRAARNVDGHVIMYADKMTDSMQRAIDETARRREIQIAYNKAHGIVPQTIKKDIRGLISISKTSHNDISKEEMDYESMSRGERKEAINALQKQMQEAAELLDFELAAQMRDLILELKLMD.

The span at 1-10 (MIDKRDDKPF) shows a compositional bias: basic and acidic residues. The interval 1–23 (MIDKRDDKPFKLKSKYKPSGDQP) is disordered. Residues 31–418 (DNIEGGEKAQ…TNTIIEQIIR (388 aa)) enclose the Helicase ATP-binding domain. 44 to 51 (GATGTGKT) provides a ligand contact to ATP. Residues 97-120 (YYDYYQPEAYVPSSDTYIEKDSSV) carry the Beta-hairpin motif. In terms of domain architecture, Helicase C-terminal spans 435–601 (QMDDLLGEIN…TIKKDIRGLI (167 aa)). Positions 627-662 (KEAINALQKQMQEAAELLDFELAAQMRDLILELKLM) constitute a UVR domain.

It belongs to the UvrB family. In terms of assembly, forms a heterotetramer with UvrA during the search for lesions. Interacts with UvrC in an incision complex.

Its subcellular location is the cytoplasm. Functionally, the UvrABC repair system catalyzes the recognition and processing of DNA lesions. A damage recognition complex composed of 2 UvrA and 2 UvrB subunits scans DNA for abnormalities. Upon binding of the UvrA(2)B(2) complex to a putative damaged site, the DNA wraps around one UvrB monomer. DNA wrap is dependent on ATP binding by UvrB and probably causes local melting of the DNA helix, facilitating insertion of UvrB beta-hairpin between the DNA strands. Then UvrB probes one DNA strand for the presence of a lesion. If a lesion is found the UvrA subunits dissociate and the UvrB-DNA preincision complex is formed. This complex is subsequently bound by UvrC and the second UvrB is released. If no lesion is found, the DNA wraps around the other UvrB subunit that will check the other stand for damage. In Streptococcus pyogenes serotype M28 (strain MGAS6180), this protein is UvrABC system protein B.